A 341-amino-acid polypeptide reads, in one-letter code: UPF0324 membrane protein SMU_2059c (341 aa).

A run of 11 helical transmembrane segments spans residues 7-24 (KLSG…AWFL), 28-47 (FPLV…LAIF), 68-85 (FAVV…VLTV), 90-107 (LPII…AFLL), 120-142 (LVGV…VIQA), 147-169 (IAQS…PTLG), 178-200 (GFAL…AAAW), 211-233 (GATI…LSFY), 254-276 (VFPM…TALG), 291-310 (FCIV…VKLV), and 317-339 (IVLG…HLLG).

It belongs to the UPF0324 family.

Its subcellular location is the cell membrane. The protein is UPF0324 membrane protein SMU_2059c of Streptococcus mutans serotype c (strain ATCC 700610 / UA159).